The following is a 492-amino-acid chain: Catalase (492 aa).

Residues histidine 65 and asparagine 138 contribute to the active site. Tyrosine 348 contributes to the heme binding site.

The protein belongs to the catalase family. In terms of assembly, homotetramer. Heme is required as a cofactor.

Its subcellular location is the cytoplasm. It is found in the cytosol. It localises to the peroxisome matrix. It catalyses the reaction 2 H2O2 = O2 + 2 H2O. Its function is as follows. Catalyzes the degradation of hydrogen peroxide (H(2)O(2)) generated by peroxisomal oxidases to water and oxygen, thereby protecting cells from the toxic effects of hydrogen peroxide. This chain is Catalase, found in Vigna radiata var. radiata (Mung bean).